The chain runs to 259 residues: UPF0246 protein VF_2109 (259 aa).

The protein belongs to the UPF0246 family.

This Aliivibrio fischeri (strain ATCC 700601 / ES114) (Vibrio fischeri) protein is UPF0246 protein VF_2109.